The primary structure comprises 584 residues: Outer membrane transporter CdiB-2 (584 aa).

The N-terminal stretch at 1–20 (MATRFAILPVTALITLTAQA) is a signal peptide. Residues 24–44 (PTPNDQAAAARANAEQNQQAQ) are compositionally biased toward low complexity. The disordered stretch occupies residues 24-72 (PTPNDQAAAARANAEQNQQAQQRRDAQQRDATVQAPGVRSDVPRPEAYP). A POTRA domain is found at 98–171 (SKAQGASALP…GALKLALIPG (74 aa)).

This sequence belongs to the TPS (TC 1.B.20) family.

Its subcellular location is the cell outer membrane. Its function is as follows. Potential outer membrane protein component of a toxin-immunity protein module, which functions as a cellular contact-dependent growth inhibition (CDI) system. CDI modules allow bacteria to communicate with and inhibit the growth of closely related neighboring bacteria in a contact-dependent fashion. This protein may be required for secretion and assembly of the CdiA toxin protein. Expression of this cdiAIB locus in B.thailandensis confers protection against other bacteria carrying the locus; growth inhibition requires cellular contact. Functionally, probable member of a two partner secretion pathway (TPS) in which it mediates the secretion of CdiA2. This is Outer membrane transporter CdiB-2 (cdiB2) from Burkholderia pseudomallei (strain 1026b).